Here is a 287-residue protein sequence, read N- to C-terminus: Protein REVEILLE 3 (287 aa).

The HTH myb-type domain occupies 56–110; it reads TITKSRENWTEQEHDKFLEALHLFDRDWKKIKAFVGSKTVIQIRSHAQKYFLKVQ. Positions 83 to 106 form a DNA-binding region, H-T-H motif; the sequence is WKKIKAFVGSKTVIQIRSHAQKYF. Positions 111 to 135 are disordered; sequence KNGTKEHLPPPRPKRKANHPYPQKA.

Its subcellular location is the nucleus. In terms of biological role, probable transcription factor. The protein is Protein REVEILLE 3 (RVE3) of Arabidopsis thaliana (Mouse-ear cress).